A 434-amino-acid chain; its full sequence is ATP phosphoribosyltransferase regulatory subunit (434 aa).

Belongs to the class-II aminoacyl-tRNA synthetase family. HisZ subfamily. Heteromultimer composed of HisG and HisZ subunits.

It is found in the cytoplasm. The protein operates within amino-acid biosynthesis; L-histidine biosynthesis; L-histidine from 5-phospho-alpha-D-ribose 1-diphosphate: step 1/9. Functionally, required for the first step of histidine biosynthesis. May allow the feedback regulation of ATP phosphoribosyltransferase activity by histidine. The protein is ATP phosphoribosyltransferase regulatory subunit of Geobacter metallireducens (strain ATCC 53774 / DSM 7210 / GS-15).